A 367-amino-acid chain; its full sequence is Pectate lyase 1 (367 aa).

The first 21 residues, 1 to 21 (MASPCLIAFLVFLCAIVSCCS), serve as a signal peptide directing secretion. Cystine bridges form between C28–C45 and C128–C147. N-linked (GlcNAc...) asparagine glycosylation is present at N148. D170 contacts Ca(2+). N178 is a glycosylation site (N-linked (GlcNAc...) asparagine). 2 residues coordinate Ca(2+): D194 and D198. R250 is an active-site residue. Residues C306 and C312 are joined by a disulfide bond.

The protein belongs to the polysaccharide lyase 1 family. Amb a subfamily. Ca(2+) is required as a cofactor.

The catalysed reaction is Eliminative cleavage of (1-&gt;4)-alpha-D-galacturonan to give oligosaccharides with 4-deoxy-alpha-D-galact-4-enuronosyl groups at their non-reducing ends.. Its pathway is glycan metabolism; pectin degradation; 2-dehydro-3-deoxy-D-gluconate from pectin: step 2/5. Has pectate lyase activity. In Juniperus virginiana (Eastern redcedar), this protein is Pectate lyase 1.